Reading from the N-terminus, the 240-residue chain is Type II restriction enzyme DdeI (240 aa).

The enzyme catalyses Endonucleolytic cleavage of DNA to give specific double-stranded fragments with terminal 5'-phosphates.. A P subtype restriction enzyme that recognizes the double-stranded sequence 5'-CTNAG-3' and cleaves after C-1. In Desulfomicrobium norvegicum (strain DSM 1741 / NCIMB 8310) (Desulfovibrio baculatus (strain Norway 4)), this protein is Type II restriction enzyme DdeI (ddeIR).